Here is a 75-residue protein sequence, read N- to C-terminus: Exodeoxyribonuclease 7 small subunit (75 aa).

The protein belongs to the XseB family. In terms of assembly, heterooligomer composed of large and small subunits.

It localises to the cytoplasm. It catalyses the reaction Exonucleolytic cleavage in either 5'- to 3'- or 3'- to 5'-direction to yield nucleoside 5'-phosphates.. In terms of biological role, bidirectionally degrades single-stranded DNA into large acid-insoluble oligonucleotides, which are then degraded further into small acid-soluble oligonucleotides. This Anaplasma phagocytophilum (strain HZ) protein is Exodeoxyribonuclease 7 small subunit.